The sequence spans 504 residues: Maturase K (504 aa).

The protein belongs to the intron maturase 2 family. MatK subfamily.

It localises to the plastid. It is found in the chloroplast. Functionally, usually encoded in the trnK tRNA gene intron. Probably assists in splicing its own and other chloroplast group II introns. The sequence is that of Maturase K from Bombax buonopozense (Red-flowered silk cotton tree).